Here is a 423-residue protein sequence, read N- to C-terminus: D-threonate kinase (423 aa).

Residues Asp-9, Arg-51, and 81–84 (KIDS) each bind substrate. ATP contacts are provided by residues Ser-245, 355-358 (GGDI), and Gly-401.

Belongs to the four-carbon acid sugar kinase family.

It catalyses the reaction D-threonate + ATP = 4-O-phospho-D-threonate + ADP + H(+). Its function is as follows. Catalyzes the ATP-dependent phosphorylation of D-threonate to D-threonate 4-phosphate. Can also phosphorylate 4-hydroxy-L-threonine, with lower efficiency. This side reaction may serve to deal with the toxicity of 4-hydroxy-L-threonine by converting it into 4-hydroxy-L-threonine 4-phosphate, a useful product that can be used by PdxA2. The protein is D-threonate kinase of Salmonella typhimurium (strain LT2 / SGSC1412 / ATCC 700720).